Consider the following 426-residue polypeptide: Glutamate-1-semialdehyde 2,1-aminomutase (426 aa).

Lysine 265 bears the N6-(pyridoxal phosphate)lysine mark.

Belongs to the class-III pyridoxal-phosphate-dependent aminotransferase family. HemL subfamily. In terms of assembly, homodimer. Requires pyridoxal 5'-phosphate as cofactor.

The protein resides in the cytoplasm. The enzyme catalyses (S)-4-amino-5-oxopentanoate = 5-aminolevulinate. It participates in porphyrin-containing compound metabolism; protoporphyrin-IX biosynthesis; 5-aminolevulinate from L-glutamyl-tRNA(Glu): step 2/2. This Cronobacter sakazakii (strain ATCC BAA-894) (Enterobacter sakazakii) protein is Glutamate-1-semialdehyde 2,1-aminomutase.